Here is a 104-residue protein sequence, read N- to C-terminus: Replication restart protein PriB (104 aa).

Positions 1 to 101 (MTNRLALSGT…LHAEQIELID (101 aa)) constitute an SSB domain.

Belongs to the PriB family. In terms of assembly, homodimer. Interacts with PriA and DnaT. Component of the replication restart primosome. Primosome assembly occurs via a 'hand-off' mechanism. PriA binds to replication forks, subsequently PriB then DnaT bind; DnaT then displaces ssDNA to generate the helicase loading substrate.

In terms of biological role, involved in the restart of stalled replication forks, which reloads the replicative helicase on sites other than the origin of replication; the PriA-PriB pathway is the major replication restart pathway. During primosome assembly it facilitates complex formation between PriA and DnaT on DNA; stabilizes PriA on DNA. Stimulates the DNA unwinding activity of PriA helicase. The protein is Replication restart protein PriB of Citrobacter koseri (strain ATCC BAA-895 / CDC 4225-83 / SGSC4696).